The sequence spans 347 residues: S-adenosylmethionine:tRNA ribosyltransferase-isomerase (347 aa).

The protein belongs to the QueA family. In terms of assembly, monomer.

It is found in the cytoplasm. The catalysed reaction is 7-aminomethyl-7-carbaguanosine(34) in tRNA + S-adenosyl-L-methionine = epoxyqueuosine(34) in tRNA + adenine + L-methionine + 2 H(+). Its pathway is tRNA modification; tRNA-queuosine biosynthesis. Functionally, transfers and isomerizes the ribose moiety from AdoMet to the 7-aminomethyl group of 7-deazaguanine (preQ1-tRNA) to give epoxyqueuosine (oQ-tRNA). The sequence is that of S-adenosylmethionine:tRNA ribosyltransferase-isomerase from Ectopseudomonas mendocina (strain ymp) (Pseudomonas mendocina).